A 360-amino-acid polypeptide reads, in one-letter code: Pyrimidine monooxygenase RutA (360 aa).

FMN contacts are provided by residues Ile49–Lys50, Asn115, Glu124, Arg140–Tyr141, and Ser190.

Belongs to the NtaA/SnaA/DszA monooxygenase family. RutA subfamily.

It catalyses the reaction uracil + FMNH2 + NADH + O2 = (Z)-3-ureidoacrylate + FMN + NAD(+) + H2O + H(+). The catalysed reaction is thymine + FMNH2 + NADH + O2 = (Z)-2-methylureidoacrylate + FMN + NAD(+) + H2O + H(+). Its function is as follows. Catalyzes the pyrimidine ring opening between N-3 and C-4 by an unusual flavin hydroperoxide-catalyzed mechanism, adding oxygen atoms in the process to yield ureidoacrylate peracid, that immediately reacts with FMN forming ureidoacrylate and FMN-N(5)-oxide. The FMN-N(5)-oxide reacts spontaneously with NADH to produce FMN. Requires the flavin reductase RutF to regenerate FMN in vivo. In Bradyrhizobium sp. (strain BTAi1 / ATCC BAA-1182), this protein is Pyrimidine monooxygenase RutA.